Here is a 108-residue protein sequence, read N- to C-terminus: Zinc metalloproteinase/disintegrin (108 aa).

The region spanning 1–19 is the Peptidase M12B domain; the sequence is NEYQTYLTDRNPQCILNEP. The propeptide occupies 20–35; the sequence is LRTDTVSTPVSGNELL. The Disintegrin domain maps to 27–108; it reads TPVSGNELLE…ADCPRNGFYG (82 aa). 6 cysteine pairs are disulfide-bonded: C41-C56, C43-C51, C50-C73, C64-C70, C69-C94, and C82-C101. A Cell attachment site; atypical (KGD) motif is present at residues 86 to 88; that stretch reads KGD.

Belongs to the venom metalloproteinase (M12B) family. P-II subfamily. P-IIa sub-subfamily. In terms of assembly, monomeric (disintegrin). Zn(2+) is required as a cofactor. Expressed by the venom gland.

Its subcellular location is the secreted. In terms of biological role, impairs hemostasis in the envenomed animal. Functionally, inhibits platelet aggregation induced by ADP, thrombin, platelet-activating factor and collagen. Acts by inhibiting fibrinogen interaction with platelet receptors GPIIb/GPIIIa (ITGA2B/ITGB3). The chain is Zinc metalloproteinase/disintegrin from Gloydius brevicauda (Korean slamosa snake).